A 339-amino-acid polypeptide reads, in one-letter code: MILINLEHILAHISFFLPFLATLVFWGRIVCIDNKRIGSLGNKSIIIAYICITGLLLTRWFHSRHLLLSNLYESFMFLSWSFCLIHIVSEIGSKNDWLGIIIVLIAMLTHGFATVGLPIEMQQSTVLVPALQSHWLIMHVSMMIPSYATLPCGSLLVIALLITTLNKNKNFPILKFNVNSFIWSLILEKKFYLGGSGGDISSRNSSSGNGSDNDSNNNNNKKTFHSLSIDCRKLQLTQQLDYWSYRIISLGSLFLTIGILSGAVWVNEAWGSYWSWDPKETWALITWLLSAIHIHIRMIRGWQGEKPAIIASSGSSIVWFRYLGVNSPEKGLHSYGWLN.

The next 7 membrane-spanning stretches (helical) occupy residues 6–26, 37–57, 71–91, 97–117, 142–162, 247–267, and 281–299; these read LEHILAHISFFLPFLATLVFW, IGSLGNKSIIIAYICITGLLL, LYESFMFLSWSFCLIHIVSEI, WLGIIIVLIAMLTHGFATVGL, MMIPSYATLPCGSLLVIALLI, IISLGSLFLTIGILSGAVWVN, and TWALITWLLSAIHIHIRMI.

It belongs to the CcmF/CycK/Ccl1/NrfE/CcsA family. May interact with Ccs1.

Its subcellular location is the plastid. The protein resides in the chloroplast thylakoid membrane. Its function is as follows. Required during biogenesis of c-type cytochromes (cytochrome c6 and cytochrome f) at the step of heme attachment. The sequence is that of Cytochrome c biogenesis protein CcsA from Anthoceros angustus (Hornwort).